An 89-amino-acid polypeptide reads, in one-letter code: DNA/RNA-binding protein Alba (89 aa).

Belongs to the histone-like Alba family.

The protein localises to the cytoplasm. The protein resides in the chromosome. Its function is as follows. Binds double-stranded DNA tightly but without sequence specificity. Involved in DNA compaction. In Methanothrix thermoacetophila (strain DSM 6194 / JCM 14653 / NBRC 101360 / PT) (Methanosaeta thermophila), this protein is DNA/RNA-binding protein Alba.